Reading from the N-terminus, the 388-residue chain is Meiotic driver wtf13 (388 aa).

Positions 1-29 (MKNKDYPLRSSMDELSTKNDNEIDLEKGP) are enriched in basic and acidic residues. The tract at residues 1 to 39 (MKNKDYPLRSSMDELSTKNDNEIDLEKGPLPEYNSEDGS) is disordered. A run of 9 helical transmembrane segments spans residues 89–109 (LLIS…CVNP), 119–139 (AFSV…FCFF), 152–172 (VTVI…AQCV), 182–202 (CVKV…VGLY), 207–227 (DLVV…FGCV), 243–263 (CSIS…IWTL), 267–287 (LFGL…TKGL), 297–317 (ATGY…LFFY), and 331–351 (FIGN…GGIG).

The protein belongs to the WTF family. As to quaternary structure, homomer. Forms protein aggregates. The two isoforms can interact with each other and with themselves. High sequence similarity is required for their interaction.

It is found in the spore membrane. It localises to the vacuole membrane. Its subcellular location is the ascus epiplasm. The protein resides in the cytoplasm. The protein localises to the endoplasmic reticulum membrane. Promotes unequal transmission of alleles from the parental zygote to progeny spores by acting as poison/antidote system where the poison and antidote proteins are produced from the same locus; the poison component is trans-acting and targets all spores within an ascus whereas the antidote component is spore-specific, leading to poisoning of all progeny that do not inherit the allele. Its function is as follows. Localizes isoform 2 to the vacuole thereby facilitating its degradation. In addition to suppressing isoform 2, also suppresses S.pombe strain FY29033 wtf18 isoform 2. Functionally, forms toxic aggregates that disrupt spore maturation. The polypeptide is Meiotic driver wtf13 (Schizosaccharomyces pombe (strain 972 / ATCC 24843) (Fission yeast)).